Here is a 122-residue protein sequence, read N- to C-terminus: Large ribosomal subunit protein uL14 (122 aa).

This sequence belongs to the universal ribosomal protein uL14 family. Part of the 50S ribosomal subunit. Forms a cluster with proteins L3 and L19. In the 70S ribosome, L14 and L19 interact and together make contacts with the 16S rRNA in bridges B5 and B8.

Binds to 23S rRNA. Forms part of two intersubunit bridges in the 70S ribosome. The protein is Large ribosomal subunit protein uL14 of Mycolicibacterium gilvum (strain PYR-GCK) (Mycobacterium gilvum (strain PYR-GCK)).